We begin with the raw amino-acid sequence, 453 residues long: Prenyltransferase nscD (453 aa).

Dimethylallyl diphosphate contacts are provided by Arg-118, Lys-200, Tyr-202, Lys-271, Tyr-273, and Tyr-428.

The protein belongs to the tryptophan dimethylallyltransferase family.

It participates in secondary metabolite biosynthesis. Functionally, prenyltransferase; part of the gene cluster that mediates the biosynthesis of neosartoricin, a prenylated anthracenone that exhibits T-cell antiproliferative activity, suggestive of a physiological role as an immunosuppressive agent. The non-reducing polyketide synthase nscA probably synthesizes and cyclizes the decaketide backbone. The hydrolase nscB then mediates the product release through hydrolysis followed by spontaneous decarboxylation. The prenyltransferase nscD catalyzes the addition of the dimethylallyl group to the aromatic C5. The FAD-dependent monooxygenase nscC is then responsible for the stereospecific hydroxylation at C2. There is no gene encoding O-acetyltransferase in the nsc gene cluster; thus, the last step of 2-O-acetylation leading to neosartoricin may be catalyzed by an unidentified O-acetyltransferase. This chain is Prenyltransferase nscD, found in Aspergillus fumigatus (strain ATCC MYA-4609 / CBS 101355 / FGSC A1100 / Af293) (Neosartorya fumigata).